Here is a 134-residue protein sequence, read N- to C-terminus: Small ribosomal subunit protein uS11 (134 aa).

Disordered stretches follow at residues 1–22 (MPPK…KNVA) and 114–134 (SIQD…RRRV). Positions 9 to 22 (AAKKVRRKEKKNVA) are enriched in basic residues.

The protein belongs to the universal ribosomal protein uS11 family. In terms of assembly, part of the 30S ribosomal subunit. Interacts with proteins S7 and S18. Binds to IF-3.

Functionally, located on the platform of the 30S subunit, it bridges several disparate RNA helices of the 16S rRNA. Forms part of the Shine-Dalgarno cleft in the 70S ribosome. This Streptomyces coelicolor (strain ATCC BAA-471 / A3(2) / M145) protein is Small ribosomal subunit protein uS11.